We begin with the raw amino-acid sequence, 4499 residues long: Dynein alpha chain, flagellar outer arm (4499 aa).

The tract at residues 1-1677 (MSIFWEVPNA…RIRICDASFP (1677 aa)) is stem. 6 Kelch repeats span residues 29-84 (RFVL…ALDD), 86-135 (RLLV…RFGS), 137-183 (VFIF…RFDH), 199-245 (KLLI…VCDG), 253-304 (KVFS…FDVK), and 307-358 (SLLI…IRGL). The stretch at 425–534 (FANTAARNCI…IRGSPFTVKC (110 aa)) is one Filamin repeat. 2 Kelch repeats span residues 562–608 (ELVL…VLSD) and 610–661 (ELVV…AVSA). A disordered region spans residues 653-720 (PKGAAAVSAE…SRPVSAKPAP (68 aa)). Low complexity predominate over residues 655 to 689 (GAAAVSAEPSAEPAAEPAAEPAAEPDADAPAAEPA). Acidic residues predominate over residues 690 to 705 (AEGEEGAVPAEGEEGA). 2 Kelch repeats span residues 750–801 (LYVM…ATGN) and 864–913 (KLFL…TLSG). Coiled coils occupy residues 1261 to 1334 (ELHK…MIAN) and 1382 to 1450 (KKEL…RRAF). AAA stretches follow at residues 1678 to 1921 (YGYE…VLVV) and 1981 to 2225 (DVIV…KSYS). Residues 1716–1723 (GPAGTGKT) and 2019–2026 (GPTGTGRT) each bind ATP. A Kelch 11 repeat occupies 2269-2317 (MIWAFGGGLVEKDGIPYRRNFDKWFKQTWTTVKIPGKGTVYDYFVNPKT). AAA regions lie at residues 2331–2577 (DYDG…VFQG) and 2679–2928 (EYNE…ERRY). 2369 to 2376 (GGAGVGKT) lines the ATP pocket. The stretch at 2655–2688 (LADKAYDEVADYTSLYKTLTEALNEYNETNAAMD) forms a coiled coil. 2717-2724 (GVGGSGKQ) contributes to the ATP binding site. Positions 3003–3023 (VGVEKEKVNAENAAAQVEAEK) form a coiled coil. The segment at 3003–3262 (VGVEKEKVNA…ERWALTVEQL (260 aa)) is stalk. The Kelch 12 repeat unit spans residues 3070-3117 (LKKPPPGVDDITAVVIILLENNPKDKSWQAAQKLMNNVDKFLERVKSF). Coiled coils occupy residues 3170–3262 (DVVQ…VEQL) and 3486–3515 (NKERPDLEETKTQLIIQNTEFTIKLKELED). The segment at 3320-3550 (LVDDALVAGW…AKRVSTEISE (231 aa)) is AAA 5. The tract at residues 3614-3687 (GRKKGKGLKK…VGDAEDEDDE (74 aa)) is disordered. The span at 3630–3653 (QPMDHQSLMEKARRSSGVGDRRPS) shows a compositional bias: basic and acidic residues. Residues 3843-4082 (LQNFCEHMMG…LTTCGDVLYN (240 aa)) are AAA 6.

This sequence belongs to the dynein heavy chain family. As to quaternary structure, consists of at least 3 heavy chains (alpha, beta and gamma), 2 intermediate chains and 8 light chains.

Its subcellular location is the cell projection. The protein localises to the cilium. The protein resides in the flagellum. It is found in the cytoplasm. It localises to the cytoskeleton. Its subcellular location is the flagellum axoneme. Functionally, force generating protein of eukaryotic cilia and flagella. Produces force towards the minus ends of microtubules. Dynein has ATPase activity; the force-producing power stroke is thought to occur on release of ADP. The sequence is that of Dynein alpha chain, flagellar outer arm (ODA11) from Chlamydomonas reinhardtii (Chlamydomonas smithii).